The sequence spans 216 residues: ATP phosphoribosyltransferase (216 aa).

The protein belongs to the ATP phosphoribosyltransferase family. Short subfamily. As to quaternary structure, heteromultimer composed of HisG and HisZ subunits.

It is found in the cytoplasm. The catalysed reaction is 1-(5-phospho-beta-D-ribosyl)-ATP + diphosphate = 5-phospho-alpha-D-ribose 1-diphosphate + ATP. Its pathway is amino-acid biosynthesis; L-histidine biosynthesis; L-histidine from 5-phospho-alpha-D-ribose 1-diphosphate: step 1/9. Its function is as follows. Catalyzes the condensation of ATP and 5-phosphoribose 1-diphosphate to form N'-(5'-phosphoribosyl)-ATP (PR-ATP). Has a crucial role in the pathway because the rate of histidine biosynthesis seems to be controlled primarily by regulation of HisG enzymatic activity. This is ATP phosphoribosyltransferase from Nitrosomonas eutropha (strain DSM 101675 / C91 / Nm57).